A 229-amino-acid polypeptide reads, in one-letter code: Ribonuclease HII (229 aa).

The 190-residue stretch at 34–223 (WPVAGADEAG…LRKVEDGPQM (190 aa)) folds into the RNase H type-2 domain. Residues D40, E41, and D131 each contribute to the a divalent metal cation site.

It belongs to the RNase HII family. Requires Mn(2+) as cofactor. It depends on Mg(2+) as a cofactor.

The protein localises to the cytoplasm. The catalysed reaction is Endonucleolytic cleavage to 5'-phosphomonoester.. Functionally, endonuclease that specifically degrades the RNA of RNA-DNA hybrids. The sequence is that of Ribonuclease HII from Rhizobium leguminosarum bv. trifolii (strain WSM2304).